The chain runs to 258 residues: Phosphoprotein ECPP44 (258 aa).

Disordered regions lie at residues 1–25 (MASD…DRGL), 46–131 (EKVQ…PVEV), and 148–175 (KLPG…VDCA). Basic and acidic residues-rich tracts occupy residues 11-25 (SVEK…DRGL), 46-80 (EKVQ…EKLH), 109-124 (GLKE…KEED), and 148-158 (KLPGGGKKVEE).

It belongs to the plant dehydrin family. Phosphorylated in embryogenic and somatic embryos. Not phosphorylated in non-embryogenic cells.

In terms of biological role, phosphorylation of ECCP44 protein is thought to be involved in the acquisition of embryogenic competence. Unlike other dehydrins, it is not thought to function as an environmental stress tolerant. The protein is Phosphoprotein ECPP44 (ECPP44) of Daucus carota (Wild carrot).